The sequence spans 513 residues: Maturase K (513 aa).

It belongs to the intron maturase 2 family. MatK subfamily.

It is found in the plastid. Its subcellular location is the chloroplast. Functionally, usually encoded in the trnK tRNA gene intron. Probably assists in splicing its own and other chloroplast group II introns. This is Maturase K from Eleusine indica (Goosegrass).